We begin with the raw amino-acid sequence, 266 residues long: Hydroxyethylthiazole kinase (266 aa).

Met-43 is a substrate binding site. Arg-119 and Thr-166 together coordinate ATP. Position 193 (Gly-193) interacts with substrate.

The protein belongs to the Thz kinase family. The cofactor is Mg(2+).

The catalysed reaction is 5-(2-hydroxyethyl)-4-methylthiazole + ATP = 4-methyl-5-(2-phosphooxyethyl)-thiazole + ADP + H(+). It participates in cofactor biosynthesis; thiamine diphosphate biosynthesis; 4-methyl-5-(2-phosphoethyl)-thiazole from 5-(2-hydroxyethyl)-4-methylthiazole: step 1/1. Its function is as follows. Catalyzes the phosphorylation of the hydroxyl group of 4-methyl-5-beta-hydroxyethylthiazole (THZ). This chain is Hydroxyethylthiazole kinase, found in Methanococcus maripaludis (strain C5 / ATCC BAA-1333).